The sequence spans 284 residues: Probable ADP-ribose 1''-phosphate phosphatase YML087W (284 aa).

4 residues coordinate substrate: aspartate 23, glutamine 55, asparagine 80, and aspartate 90. Residues 34-230 (ESIPHAYIQN…HISKELKNVL (197 aa)) form the Macro domain. Catalysis depends on residues asparagine 80 and aspartate 90. A disulfide bridge connects residues cysteine 128 and cysteine 136. The active site involves histidine 145. 2 residues coordinate substrate: threonine 148 and threonine 195.

As to quaternary structure, homodimer.

The enzyme catalyses ADP-alpha-D-ribose 1''-phosphate + H2O = ADP-D-ribose + phosphate. Its function is as follows. Highly specific phosphatase involved in the metabolism of ADP-ribose 1''-phosphate (Appr1p) which is produced as a consequence of tRNA splicing. + phosphate. The polypeptide is Probable ADP-ribose 1''-phosphate phosphatase YML087W (Saccharomyces cerevisiae (strain ATCC 204508 / S288c) (Baker's yeast)).